We begin with the raw amino-acid sequence, 726 residues long: Long-chain-fatty-acid--CoA ligase ACSBG1 (726 aa).

The disordered stretch occupies residues Met-1–Pro-39. Residues Leu-17–Ser-36 are compositionally biased toward polar residues. Phosphoserine is present on Ser-36. Tyr-641 is subject to Phosphotyrosine. The interval Ser-707–Ser-726 is disordered.

Belongs to the ATP-dependent AMP-binding enzyme family. Bubblegum subfamily.

The protein resides in the cytoplasm. The protein localises to the cytoplasmic vesicle. It localises to the microsome. Its subcellular location is the endoplasmic reticulum. It is found in the cell membrane. The catalysed reaction is a long-chain fatty acid + ATP + CoA = a long-chain fatty acyl-CoA + AMP + diphosphate. The enzyme catalyses (E)-hexadec-2-enoate + ATP + CoA = (2E)-hexadecenoyl-CoA + AMP + diphosphate. It carries out the reaction hexadecanoate + ATP + CoA = hexadecanoyl-CoA + AMP + diphosphate. Catalyzes the conversion of fatty acids such as long-chain and very long-chain fatty acids to their active form acyl-CoAs for both synthesis of cellular lipids, and degradation via beta-oxidation. Can activate diverse saturated, monosaturated and polyunsaturated fatty acids. The chain is Long-chain-fatty-acid--CoA ligase ACSBG1 from Bos taurus (Bovine).